The chain runs to 288 residues: MIKFEKVNYTYQPNSPFASRALFDIDLEVKKGSYTALIGHTGSGKSTLLQHLNGLLQPTEGKVTVGDIVVSSTSKQKEIKPVRKKVGVVFQFPESQLFEETVLKDVAFGPQNFGIPKEKAEKIAAEKLEMVGLADEFWEKSPFELSGGQMRRVAIAGILAMEPEVLVLDEPTAGLDPKARIEMMQLFESIHQSGQTVVLVTHLMDDVADYADYVYLLEKGHIISCGTPSDVFQEVDFLKAHELGVPKATHFADQLQKTGAVAFEKLPITRAELVTLLTSLSVNSGGEN.

An ABC transporter domain is found at 2-244; it reads IKFEKVNYTY…VDFLKAHELG (243 aa). 39 to 46 contacts ATP; that stretch reads GHTGSGKS. Glu-170 acts as the Proton acceptor in catalysis.

It belongs to the ABC transporter superfamily. Energy-coupling factor EcfA family. Forms a stable energy-coupling factor (ECF) transporter complex composed of 2 membrane-embedded substrate-binding proteins (S component), 2 ATP-binding proteins (A component) and 2 transmembrane proteins (T component). In L.lactis forms a stable complex with EcfA' and EcfT and substrate-binding components. In E.coli forms a stable complex with EcfA, EcfT and individually with 3 tested substrate-binding components (BioY, NiaX and ThiT) with a stoichiometry of 1.1:1:1. The core ECF complex interacts with a number of substrate-specific binding components, including BioY, BioY2, HmpT, NiaX, PanT, QueT, RibU and ThiT.

Its subcellular location is the cell membrane. Its function is as follows. ATP-binding (A) component of a common energy-coupling factor (ECF) ABC-transporter complex. Unlike classic ABC transporters this ECF transporter provides the energy necessary to transport a number of different substrates. In this organism these probably include biotin, thiamine precursor, niacin, pantothenic acid, queuosine precursor, riboflavin and thiamine. Uptake of niacin or riboflavin into proteosomes containing EcfA1A2T and Niax or RibU has been demonstrated. Uptake requires hydrolyzable Mg-ATP and is substrate-specific; NiaX-containing proteosomes did not transport riboflavin. The polypeptide is Energy-coupling factor transporter ATP-binding protein EcfA2 (Lactococcus lactis subsp. cremoris (strain MG1363)).